Consider the following 346-residue polypeptide: 3-dehydroquinate synthase (346 aa).

Residues 62 to 67 (DGEQYK), 96 to 100 (GVISD), 120 to 121 (TT), K133, and K142 each bind NAD(+). E175, H234, and H251 together coordinate Zn(2+).

This sequence belongs to the sugar phosphate cyclases superfamily. Dehydroquinate synthase family. Requires Co(2+) as cofactor. The cofactor is Zn(2+). NAD(+) serves as cofactor.

The protein resides in the cytoplasm. The catalysed reaction is 7-phospho-2-dehydro-3-deoxy-D-arabino-heptonate = 3-dehydroquinate + phosphate. The protein operates within metabolic intermediate biosynthesis; chorismate biosynthesis; chorismate from D-erythrose 4-phosphate and phosphoenolpyruvate: step 2/7. In terms of biological role, catalyzes the conversion of 3-deoxy-D-arabino-heptulosonate 7-phosphate (DAHP) to dehydroquinate (DHQ). The polypeptide is 3-dehydroquinate synthase (Campylobacter fetus subsp. fetus (strain 82-40)).